The chain runs to 196 residues: dITP/XTP pyrophosphatase (196 aa).

10–15 (TSNKGK) provides a ligand contact to substrate. The active-site Proton acceptor is the D71. D71 provides a ligand contact to Mg(2+). Substrate is bound by residues S72, 156 to 159 (FGYD), K179, and 184 to 185 (HR).

It belongs to the HAM1 NTPase family. Homodimer. The cofactor is Mg(2+).

It catalyses the reaction XTP + H2O = XMP + diphosphate + H(+). It carries out the reaction dITP + H2O = dIMP + diphosphate + H(+). The catalysed reaction is ITP + H2O = IMP + diphosphate + H(+). Functionally, pyrophosphatase that catalyzes the hydrolysis of nucleoside triphosphates to their monophosphate derivatives, with a high preference for the non-canonical purine nucleotides XTP (xanthosine triphosphate), dITP (deoxyinosine triphosphate) and ITP. Seems to function as a house-cleaning enzyme that removes non-canonical purine nucleotides from the nucleotide pool, thus preventing their incorporation into DNA/RNA and avoiding chromosomal lesions. The protein is dITP/XTP pyrophosphatase of Haemophilus ducreyi (strain 35000HP / ATCC 700724).